The following is a 367-amino-acid chain: Trans-enoyl reductase ffsC (367 aa).

NADP(+) is bound at residue 55-58; that stretch reads CDWK. Residue 143 to 150 coordinates substrate; sequence TGIGTLGL. NADP(+)-binding positions include 203 to 206, tyrosine 221, and 268 to 269; these read SAKN and LE. 288 to 292 is a substrate binding site; it reads GMAIL. 357-358 contributes to the NADP(+) binding site; that stretch reads VS.

Belongs to the zinc-containing alcohol dehydrogenase family. Monomer.

The protein operates within mycotoxin biosynthesis. In terms of biological role, trans-enoyl reductase; part of the gene cluster that mediates the biosynthesis of the cytotoxic leucine-containing cytochalasans, including aspochalasin C, aspochalasin E, TMC-169, flavichalasine F, aspergillin PZ, aspochalasin M and flavichalasine G. The first step in the pathway is catalyzed by the hybrid PKS-NRPS ffsA that utilizes 8 units of malonyl-CoA to iteratively assemble the octaketide chain before addition of L-leucine by the C-terminal NRPS modules. Because ffsA lacks a designated enoylreductase (ER) domain, the required activity is provided the enoyl reductase fssC. The methyltransferase (MT) domain of ffsA catalyzes the alpha-methylation at C10 and C14 using S-adenosyl-L-methionine as the methyl-donating cosubstrate. Reduction by the hydrolyase ffsE, followed by dehydration and intra-molecular Diels-Alder cyclization by the Diels-Alderase ffsF then yield the required isoindolone-fused macrocycle. A number of oxidative steps catalyzed by the tailoring cytochrome P450 monooxygenase ffsD, the FAD-linked oxidoreductase ffsJ and the short-chain dehydrogenase/reductase ffsI, are further required to afford the final products. This Aspergillus flavipes protein is Trans-enoyl reductase ffsC.